Consider the following 138-residue polypeptide: Large-conductance mechanosensitive channel (138 aa).

A run of 3 helical transmembrane segments spans residues 19–39 (VGVI…GDII), 40–60 (MPII…IPLA), and 81–101 (GSFL…FMVI).

The protein belongs to the MscL family. In terms of assembly, homopentamer.

It is found in the cell inner membrane. Its function is as follows. Channel that opens in response to stretch forces in the membrane lipid bilayer. May participate in the regulation of osmotic pressure changes within the cell. The sequence is that of Large-conductance mechanosensitive channel from Bradyrhizobium sp. (strain ORS 278).